The following is a 344-amino-acid chain: Methionine aminopeptidase 1C, chloroplastic/mitochondrial (344 aa).

H172 contributes to the substrate binding site. Residues D189, D200, and H262 each contribute to the a divalent metal cation site. Residue H269 participates in substrate binding. Positions 296 and 327 each coordinate a divalent metal cation.

The protein belongs to the peptidase M24A family. Methionine aminopeptidase type 1 subfamily. Co(2+) serves as cofactor. Zn(2+) is required as a cofactor. It depends on Mn(2+) as a cofactor. The cofactor is Fe(2+). Ubiquitous.

The protein localises to the plastid. It localises to the chloroplast. Its subcellular location is the mitochondrion. The catalysed reaction is Release of N-terminal amino acids, preferentially methionine, from peptides and arylamides.. In terms of biological role, removes the N-terminal methionine from nascent proteins. The N-terminal methionine is often cleaved when the second residue in the primary sequence is small and uncharged (Met-Ala-, Cys, Gly, Pro, Ser, Thr, or Val). The sequence is that of Methionine aminopeptidase 1C, chloroplastic/mitochondrial (MAP1C) from Arabidopsis thaliana (Mouse-ear cress).